Consider the following 156-residue polypeptide: Snaclec A2 (156 aa).

The signal sequence occupies residues 1-23 (MGRLISVSFGLLVVFLSLSGTGA). Disulfide bonds link C27/C38, C55/C154, and C129/C146. The C-type lectin domain occupies 34–155 (HEGHCYKVFN…CGQPYRFTCE (122 aa)).

Belongs to the snaclec family. As to quaternary structure, heterodimer; disulfide-linked. Expressed by the venom gland.

It is found in the secreted. In terms of biological role, interferes with one step of hemostasis (modulation of platelet aggregation, or coagulation cascade, for example). This is Snaclec A2 from Macrovipera lebetinus (Levantine viper).